The following is a 139-amino-acid chain: Large ribosomal subunit protein uL16c (139 aa).

Positions 1–17 (MLSPKKTKFRKQHRGRM) are enriched in basic residues. A disordered region spans residues 1 to 23 (MLSPKKTKFRKQHRGRMKGSASK).

This sequence belongs to the universal ribosomal protein uL16 family. As to quaternary structure, part of the 50S ribosomal subunit.

It localises to the plastid. Its subcellular location is the chloroplast. The polypeptide is Large ribosomal subunit protein uL16c (Pyropia yezoensis (Susabi-nori)).